Consider the following 146-residue polypeptide: MNPAHLLVLPAVCVSFLGASIIPPQSLNLIQFKDMIRCTIPCERTWGEYADYGCYCGKGGSGRPVDALDRCCYVHDNCYGEAQKRNCNPYMKSYSFKCAKRTLFCYDAPGSCARFVCDCDRTAALCFGDSEYIGRHKNIDTKRHCQ.

An N-terminal signal peptide occupies residues 1–19 (MNPAHLLVLPAVCVSFLGA). Residues 20 to 27 (SIIPPQSL) constitute a propeptide that is removed on maturation. 6 disulfides stabilise this stretch: Cys-54–Cys-145, Cys-56–Cys-72, Cys-71–Cys-126, Cys-78–Cys-119, Cys-87–Cys-112, and Cys-105–Cys-117. Ca(2+) is bound by residues Tyr-55, Gly-57, and Gly-59. The active site involves His-75. Ca(2+) is bound at residue Asp-76. Residue Asp-120 is part of the active site.

This sequence belongs to the phospholipase A2 family. Group I subfamily. D49 sub-subfamily. Heterodimer with beta-bungarotoxin B chain; disulfide-linked. The A chain has phospholipase A2 activity and the B chain shows homology with the basic protease inhibitors. The cofactor is Ca(2+). As to expression, expressed by the venom gland.

The protein localises to the secreted. It carries out the reaction a 1,2-diacyl-sn-glycero-3-phosphocholine + H2O = a 1-acyl-sn-glycero-3-phosphocholine + a fatty acid + H(+). Its function is as follows. Snake venom phospholipase A2 (PLA2) that inhibits neuromuscular transmission by blocking acetylcholine release from the nerve termini. PLA2 catalyzes the calcium-dependent hydrolysis of the 2-acyl groups in 3-sn-phosphoglycerides. The polypeptide is Basic phospholipase A2 beta-bungarotoxin A1 chain (Bungarus flaviceps flaviceps (Red-headed krait)).